Reading from the N-terminus, the 23-residue chain is Basic phospholipase A2 homolog CTs-K49c (23 aa).

Post-translationally, contains 7 disulfide bonds. As to expression, expressed by the venom gland.

The protein localises to the secreted. Functionally, snake venom phospholipase A2 homolog that lacks catalytic activity. Shows myotoxic activities. Induces local edema a few hours after injection (5-10 ug) in the hind paw. The polypeptide is Basic phospholipase A2 homolog CTs-K49c (Trimeresurus stejnegeri (Chinese green tree viper)).